A 626-amino-acid chain; its full sequence is Probable potassium transport system protein Kup (626 aa).

Transmembrane regions (helical) follow at residues 11–31, 55–75, 103–123, 140–160, 171–191, 216–236, 250–270, 282–302, 340–360, 369–389, 395–415, and 422–442; these read FLTLSAGALGVVYGDIGTSPL, LSLIFWALFIIVAVKYVVFVM, AWIISLGLFGTALFYGDGMIT, AALSHYVVPASILILLALFLI, LFGPIMLLWFLSIGTLGFVSL, LGFAALGAVVLAVTGAEALYA, WFAVVFPSLILNYLGQGALLI, LLVPEWALYPMIGLATAATVI, IYAPAVNRLLLISVLALVLAF, AYGLAVVGTMVVTTLLALVVA, WPGLALLVTGAVLLSVDLSFL, and LGDGGWIPLSLGLILATVMST.

Belongs to the HAK/KUP transporter (TC 2.A.72) family.

Its subcellular location is the cell inner membrane. It carries out the reaction K(+)(in) + H(+)(in) = K(+)(out) + H(+)(out). Transport of potassium into the cell. Likely operates as a K(+):H(+) symporter. The protein is Probable potassium transport system protein Kup of Methylococcus capsulatus (strain ATCC 33009 / NCIMB 11132 / Bath).